Consider the following 388-residue polypeptide: Succinate--CoA ligase [ADP-forming] subunit beta (388 aa).

The ATP-grasp domain maps to lysine 9 to histidine 244. ATP is bound by residues lysine 46, glycine 53–glycine 55, glutamate 99, threonine 102, and glutamate 107. Mg(2+)-binding residues include asparagine 199 and aspartate 213. Substrate is bound by residues asparagine 264 and glycine 321–valine 323.

The protein belongs to the succinate/malate CoA ligase beta subunit family. Heterotetramer of two alpha and two beta subunits. Requires Mg(2+) as cofactor.

The enzyme catalyses succinate + ATP + CoA = succinyl-CoA + ADP + phosphate. It carries out the reaction GTP + succinate + CoA = succinyl-CoA + GDP + phosphate. It functions in the pathway carbohydrate metabolism; tricarboxylic acid cycle; succinate from succinyl-CoA (ligase route): step 1/1. In terms of biological role, succinyl-CoA synthetase functions in the citric acid cycle (TCA), coupling the hydrolysis of succinyl-CoA to the synthesis of either ATP or GTP and thus represents the only step of substrate-level phosphorylation in the TCA. The beta subunit provides nucleotide specificity of the enzyme and binds the substrate succinate, while the binding sites for coenzyme A and phosphate are found in the alpha subunit. This is Succinate--CoA ligase [ADP-forming] subunit beta from Shewanella amazonensis (strain ATCC BAA-1098 / SB2B).